A 327-amino-acid polypeptide reads, in one-letter code: Acetyl-coenzyme A carboxylase carboxyl transferase subunit beta (327 aa).

The region spanning 24–293 (LWIKCPDTGQ…LTVTTAVEAP (270 aa)) is the CoA carboxyltransferase N-terminal domain. A compositionally biased stretch (low complexity) spans 293-311 (PAEAAAKAEPEATTTEQPV). Residues 293 to 327 (PAEAAAKAEPEATTTEQPVAPAPTEPPAQPAAPQA) are disordered. A compositionally biased stretch (pro residues) spans 312 to 327 (APAPTEPPAQPAAPQA).

The protein belongs to the AccD/PCCB family. Acetyl-CoA carboxylase is a heterohexamer composed of biotin carboxyl carrier protein (AccB), biotin carboxylase (AccC) and two subunits each of ACCase subunit alpha (AccA) and ACCase subunit beta (AccD).

It is found in the cytoplasm. It carries out the reaction N(6)-carboxybiotinyl-L-lysyl-[protein] + acetyl-CoA = N(6)-biotinyl-L-lysyl-[protein] + malonyl-CoA. It participates in lipid metabolism; malonyl-CoA biosynthesis; malonyl-CoA from acetyl-CoA: step 1/1. Its function is as follows. Component of the acetyl coenzyme A carboxylase (ACC) complex. Biotin carboxylase (BC) catalyzes the carboxylation of biotin on its carrier protein (BCCP) and then the CO(2) group is transferred by the transcarboxylase to acetyl-CoA to form malonyl-CoA. The chain is Acetyl-coenzyme A carboxylase carboxyl transferase subunit beta from Rhodopseudomonas palustris (strain TIE-1).